A 487-amino-acid polypeptide reads, in one-letter code: Schwannomin-interacting protein 1 (487 aa).

Disordered regions lie at residues 1-74 (MERS…VSAL), 88-221 (VIDE…PVPP), 236-260 (FREQ…NERE), and 308-354 (SGSD…SLDD). Basic and acidic residues predominate over residues 14 to 27 (DQGKHSDSDYREDG). Over residues 32-67 (SDAGSSSSSSRASSQSNSTKVTPCSECKSSSSPGGS) the composition is skewed to low complexity. Residues 92-106 (WAPEEDGEEEEEEDE) are compositionally biased toward acidic residues. 2 stretches are compositionally biased toward basic and acidic residues: residues 107–123 (RDQR…REPG) and 153–162 (HQHDPQDLRH). Serine 117 is modified (phosphoserine). A compositionally biased stretch (polar residues) spans 242 to 255 (RNQGQARTNSTSAQ). Residues 309–323 (GSDKDSDADDSKTET) are compositionally biased toward basic and acidic residues. The segment covering 324-335 (SLDTPLSPMSKQ) has biased composition (polar residues). Residues 344-354 (TTEEESESLDD) are compositionally biased toward acidic residues. Positions 424–458 (IGQLQVIVNDLHSQIESLNEELVQLLLIRDELHTE) form a coiled coil.

This sequence belongs to the SCHIP1 family. Homooligomer (via coiled coil domain). Interacts with NF2; the interaction is direct. Interacts with ANK3. As to expression, preferentially expressed in brain, skeletal muscles and heart. Also expressed in detected in pancreas, kidney, liver, lung, and placenta.

Its subcellular location is the cytoplasm. In Homo sapiens (Human), this protein is Schwannomin-interacting protein 1.